The sequence spans 142 residues: Mitochondrial import receptor subunit TOM22 homolog (142 aa).

A compositionally biased stretch (low complexity) spans 1 to 11 (MAAAVAAAGAG). Residues 1 to 42 (MAAAVAAAGAGEPQSPDELLPKGDAEKPEEELEEDDDEELDE) are disordered. Ala-2 is modified (N-acetylalanine). Topologically, residues 2–83 (AAAVAAAGAG…AQKMYRFSRA (82 aa)) are cytoplasmic. The residue at position 15 (Ser-15) is a Phosphoserine. The segment covering 27–42 (KPEEELEEDDDEELDE) has biased composition (acidic residues). Positions 41-50 (DETLSERLWG) are import sequence; necessary for mitochondrion outer membrane localization and integration in the TOM complex. At Thr-43 the chain carries Phosphothreonine. Position 45 is a phosphoserine (Ser-45). The interval 83-103 (AALWIGTTSFMILVLPVVFET) is TMD; necessary for mitochondrion outer membrane localization and integration in the TOM complex. A helical transmembrane segment spans residues 84 to 103 (ALWIGTTSFMILVLPVVFET). Residues 104–142 (EKLQMEQQQQLQQRQILLGPNTGLSGGMPGALPSLPGKI) are Mitochondrial intermembrane-facing. A C-tail signal; necessary for mitochondrion outer membrane localization and integration in the TOM complex region spans residues 123–142 (PNTGLSGGMPGALPSLPGKI).

It belongs to the Tom22 family. In terms of assembly, forms part of the preprotein translocase complex of the outer mitochondrial membrane (TOM complex) which consists of at least 7 different proteins (TOMM5, TOMM6, TOMM7, TOMM20, TOMM22, TOMM40 and TOMM70). Interacts with TOMM40. Interacts with PPP2R2B. Ubiquitous.

The protein localises to the mitochondrion outer membrane. Central receptor component of the translocase of the outer membrane of mitochondria (TOM complex) responsible for the recognition and translocation of cytosolically synthesized mitochondrial preproteins. Together with the peripheral receptor TOM20 functions as the transit peptide receptor and facilitates the movement of preproteins into the translocation pore. Required for the translocation across the mitochondrial outer membrane of cytochrome P450 monooxygenases. The chain is Mitochondrial import receptor subunit TOM22 homolog (TOMM22) from Homo sapiens (Human).